Here is a 627-residue protein sequence, read N- to C-terminus: tRNA uridine 5-carboxymethylaminomethyl modification enzyme MnmG (627 aa).

Residues 16–21 (GAGHAG), Val-128, and Ser-183 each bind FAD. 277–291 (GPRYCPSIEDKIVRF) is an NAD(+) binding site. Position 374 (Gln-374) interacts with FAD.

The protein belongs to the MnmG family. In terms of assembly, homodimer. Heterotetramer of two MnmE and two MnmG subunits. FAD is required as a cofactor.

The protein localises to the cytoplasm. In terms of biological role, NAD-binding protein involved in the addition of a carboxymethylaminomethyl (cmnm) group at the wobble position (U34) of certain tRNAs, forming tRNA-cmnm(5)s(2)U34. The chain is tRNA uridine 5-carboxymethylaminomethyl modification enzyme MnmG from Finegoldia magna (strain ATCC 29328 / DSM 20472 / WAL 2508) (Peptostreptococcus magnus).